The following is a 119-amino-acid chain: Large ribosomal subunit protein bL20 (119 aa).

Belongs to the bacterial ribosomal protein bL20 family.

In terms of biological role, binds directly to 23S ribosomal RNA and is necessary for the in vitro assembly process of the 50S ribosomal subunit. It is not involved in the protein synthesizing functions of that subunit. The protein is Large ribosomal subunit protein bL20 of Streptococcus suis (strain 98HAH33).